The following is a 500-amino-acid chain: MSLYGGIPTNLVSGMSSAGAICTTQIRDAREREKREIGLLNDRLADYIEKVRFLKAQNHVLSHDIEILRRGFSGGGHISSFFESEISNCTVISERILSSRTKFQADITGLEGEIEIYRKKWLEALKVVRSHREDHHVNLDKLAEVEAQIALFNRKIRIVEEDVLRIRRETGGIQNDIGRIHSQIHAEIALKNERHHSVQMLLQRVQVIQTENSSRIEQELIYIHRDTTLENRDYFRQELQAAMRDIRANYEAMSIRSREDIEIAYRKRIDEIRVIPAHVHIEDYREELLSIRTTLSTTHSRLAEIESRNAWLLTTITDLKHQQAEEARIFEATLDAKQATYEQFKERCTELSIQMEKLCDHETSLQAELERYRVLLNGANVTTYVSNSTGAAGYRSSTHVATTTTTTTNGYSSGYTAGGYTSGGYTTGGYTRGITAGGAVGGISTGGYIGRSSSSHGISVGGNIGGVSVGGHINGYHASGDISAAGRHHESSYSYSSSNN.

Residues 1–36 form a head region; the sequence is MSLYGGIPTNLVSGMSSAGAICTTQIRDAREREKRE. Residues 33-383 enclose the IF rod domain; it reads EKREIGLLND…VLLNGANVTT (351 aa). Positions 37–68 are coil 1A; the sequence is IGLLNDRLADYIEKVRFLKAQNHVLSHDIEIL. The linker 1 stretch occupies residues 69-81; the sequence is RRGFSGGGHISSF. The segment at 82-219 is coil 1B; the sequence is FESEISNCTV…TENSSRIEQE (138 aa). Residues 220-237 form a linker 12 region; sequence LIYIHRDTTLENRDYFRQ. Residues 238 to 383 are coil 2; that stretch reads ELQAAMRDIR…VLLNGANVTT (146 aa). Residues 384 to 496 are tail; it reads YVSNSTGAAG…RHHESSYSYS (113 aa).

It belongs to the intermediate filament family.

The protein localises to the cytoplasm. Cytoplasmic intermediate filaments provide mechanical strength to cells. Not essential protein. This Caenorhabditis elegans protein is Intermediate filament protein ifc-1 (ifc-1).